The primary structure comprises 860 residues: Beta-glucosidase A (860 aa).

The N-terminal stretch at 1-19 is a signal peptide; it reads MRFTLIEAVALTAVSLASA. N-linked (GlcNAc...) asparagine glycans are attached at residues Asn61, Asn211, and Asn252. Asp280 is a catalytic residue. N-linked (GlcNAc...) asparagine glycosylation is found at Asn315, Asn322, Asn354, Asn387, Asn442, Asn523, Asn542, Asn564, Asn658, Asn690, and Asn712. The segment at 719–753 is disordered; the sequence is SSGDASYGQDSSDYLPEGATDGSAQPILPAGGGPG.

The protein belongs to the glycosyl hydrolase 3 family.

It localises to the secreted. The enzyme catalyses Hydrolysis of terminal, non-reducing beta-D-glucosyl residues with release of beta-D-glucose.. It functions in the pathway glycan metabolism; cellulose degradation. Functionally, beta-glucosidases are one of a number of cellulolytic enzymes involved in the degradation of cellulosic biomass. Catalyzes the last step releasing glucose from the inhibitory cellobiose. This Aspergillus kawachii (strain NBRC 4308) (White koji mold) protein is Beta-glucosidase A (bglA).